Here is an 89-residue protein sequence, read N- to C-terminus: Neuropeptide F (89 aa).

Positions 1-29 (MASGTFTQRLLVALMIFALIADLSTLVAA) are cleaved as a signal peptide. A Phenylalanine amide modification is found at Phe61. A propeptide spanning residues 65–89 (GGYLNPAIFGQDEQEVDWQDSTFSR) is cleaved from the precursor.

The protein belongs to the NPY family.

Its subcellular location is the secreted. Its function is as follows. An integral part of the sensory system that mediates food signaling, providing the neural basis for the regulation of food response; coordinates larval foraging and social behavior changes during development. May have a hormonal role in females. This Anopheles gambiae (African malaria mosquito) protein is Neuropeptide F.